The chain runs to 362 residues: Exopolygalacturonase (362 aa).

4 PbH1 repeats span residues 138-164 (CKNLTFERFKISAAETSINTDGIHIGR), 165-186 (SDGVNIINTEIKTGDDCISLGD), 188-208 (SKNINITNITCGPGHGISVGS), and 218-239 (VVGIYVKNCTITGSQNGVRIKT). Asn140 carries N-linked (GlcNAc...) asparagine glycosylation. The Proton donor role is filled by Asp179. N-linked (GlcNAc...) asparagine glycans are attached at residues Asn192 and Asn195. His202 is an active-site residue. Asn225 carries an N-linked (GlcNAc...) asparagine glycan.

This sequence belongs to the glycosyl hydrolase 28 family. Pollen tubes growing through the style during pollination.

It localises to the secreted. Its subcellular location is the cell wall. It catalyses the reaction [(1-&gt;4)-alpha-D-galacturonosyl](n) + H2O = alpha-D-galacturonate + [(1-&gt;4)-alpha-D-galacturonosyl](n-1). Its function is as follows. May function in depolymerizing pectin during pollen development, germination, and tube growth. Acts as an exo-polygalacturonase. The protein is Exopolygalacturonase of Oenothera organensis (Evening primrose).